The following is a 257-amino-acid chain: uncharacterized protein (257 aa).

The helical transmembrane segment at 7 to 27 (IGILEIVVILSILITSVSLAY) threads the bilayer.

The protein resides in the membrane. This is an uncharacterized protein from Methanocaldococcus jannaschii (strain ATCC 43067 / DSM 2661 / JAL-1 / JCM 10045 / NBRC 100440) (Methanococcus jannaschii).